The following is a 445-amino-acid chain: Crotonyl-CoA reductase (445 aa).

Glu-149 serves as a coordination point for Zn(2+).

It belongs to the zinc-containing alcohol dehydrogenase family. Crotonyl-CoA carboxylase/reductase subfamily. Homodimer. Zn(2+) serves as cofactor.

The catalysed reaction is butanoyl-CoA + NADP(+) = (2E)-butenoyl-CoA + NADPH + H(+). Its activity is regulated as follows. Inhibited by NADPH at concentrations above 200 uM, by MgCl (30%), by ZnCl(2) (55%), and by CoCl, MnCl and CaCl (100%). Also inhibited by iodoacetamide, N-ethylmaleamide, the thiol group inhibitor beta-chloromercuribenzoate, palmitoyl-CoA and myristoyl-CoA. Catalyzes the conversion of crotonyl-CoA to butyryl-CoA. It uses only NADP as electron donor. May have a role in providing butyryl-CoA as a starter unit for straight-chain fatty acid biosynthesis. In Streptomyces avermitilis (strain ATCC 31267 / DSM 46492 / JCM 5070 / NBRC 14893 / NCIMB 12804 / NRRL 8165 / MA-4680), this protein is Crotonyl-CoA reductase (ccrA2).